A 965-amino-acid polypeptide reads, in one-letter code: Serine/threonine-protein kinase tousled-like 1 (965 aa).

6 disordered regions span residues 1-22 (MSMLSMDGIVAGGGSSSGGGER), 35-72 (PQNKALPTVQSSGSSSNHAPIVGESPLGTVSSTMATGD), 95-120 (QNSSHPSTSVMMQQVPPQNGGATRSS), 172-292 (NHQQ…KQER), 320-402 (QNQG…QSGR), and 538-576 (RKPLGIGKEPKRPQAVNSQNDSNGMQPSTSSNTNGDDAI). Over residues 10–21 (VAGGGSSSGGGE) the composition is skewed to gly residues. Polar residues predominate over residues 42-52 (TVQSSGSSSNH). The span at 172–231 (NHQQQMQQMHYHQQQQQYQQQQAQHHQMYAPQIQQQQQQPQQQSQQQSAQQPQQSSAALQ) shows a compositional bias: low complexity. Composition is skewed to polar residues over residues 233 to 244 (VNESSNLSSAGS) and 320 to 341 (QNQGSPKRQPAVQQNGSNSYDS). Residues 342-355 (QQQQPQMNQHEMQN) show a composition bias toward low complexity. Over residues 365–381 (LGVNNRGTPTPTQQQHY) the composition is skewed to polar residues. Residues 382-401 (SSDSNSNSNQSPPGQGNQSG) are compositionally biased toward low complexity. A compositionally biased stretch (polar residues) spans 552–572 (AVNSQNDSNGMQPSTSSNTNG). The residue at position 634 (Ser-634) is a Phosphoserine. A Protein kinase domain is found at 651-928 (YLMLNLLGKG…VFELAKHELF (278 aa)). ATP is bound by residues 657 to 665 (LGKGGFSEV) and Lys-680. Catalysis depends on Asp-781, which acts as the Proton acceptor.

It belongs to the protein kinase superfamily. Ser/Thr protein kinase family. As to quaternary structure, interacts with air-2. Post-translationally, autophosphorylates in vitro. Phosphorylation on Ser-634 by air-2 enhances catalytic activity.

The protein resides in the nucleus. It catalyses the reaction L-seryl-[protein] + ATP = O-phospho-L-seryl-[protein] + ADP + H(+). The catalysed reaction is L-threonyl-[protein] + ATP = O-phospho-L-threonyl-[protein] + ADP + H(+). Functionally, essential for appropriate transcription during embryonic development. May act during transcription elongation to activate the RNA polymerase II large subunit (ama-1) by phosphorylating the Ser-2 residues of the C-terminal domain 7-residue repeats. Does not phosphorylate histone H3. The chain is Serine/threonine-protein kinase tousled-like 1 (tlk-1) from Caenorhabditis elegans.